The primary structure comprises 289 residues: MKEQTTDRTNGGTSNAFTIPGTEVRMMSSRNENRTYHIFISKPSTPPPPAGYPVIYLLDANSVFGTMTEAVRIQGRRPEKTGVIPAVIVGIGYETAEPFSSARHRDFTMPTAQSKLPERPDGREWPEHGGAEGFFRFIEEDLKPEIERDYQIDKKRQTIFGHSLGGLFVLQVLLTKPDAFQTYIAGSPSIHWNKPFILKKTDHFVSLTKKNNQPINILLAAGELEQHHKSRMNDNARELYERLAVLSEQGIRAEFCEFSGEGHISVLPVLVSRALRFALHPDGPHLSMG.

Residues Ser-163, Glu-225, and His-263 each act as charge relay system in the active site.

It belongs to the esterase D family.

It localises to the cytoplasm. Its function is as follows. Catalyzes the hydrolysis of the trilactone cycle of ferri-bacillibactin (ferri-BB) complex, leading to the formation of bacillibactin monomers and to cytosolic iron release, thus making iron available for metabolic use. Can also hydrolyze bacillibactin (BB), however the catalytic efficiency for ferri-BB hydrolysis is much higher than for BB. This chain is Ferri-bacillibactin esterase BesA (besA), found in Bacillus subtilis (strain 168).